Reading from the N-terminus, the 360-residue chain is U7 snRNA-associated Sm-like protein LSm11 (360 aa).

The segment at 1–29 (MEERERGARSAGAGSPARPPSPRLDVSSD) is disordered. Ser-15 and Ser-21 each carry phosphoserine. Arg-41 carries the post-translational modification Omega-N-methylarginine. Residues 68-143 (RGGGRGRGRA…PGRSRKAPRN (76 aa)) form a disordered region. Residues 78-94 (RGAAAGSGVPAAPGPSG) are compositionally biased toward low complexity. A Glycyl lysine isopeptide (Lys-Gly) (interchain with G-Cter in SUMO2) cross-link involves residue Lys-120. A Phosphoserine modification is found at Ser-154. In terms of domain architecture, Sm spans 154–229 (SPLGELHRCI…LTLTRLFDRL (76 aa)). Residues 171–204 (VHIRTFKGLRGVCTGFLVAFDKFWNMALTDVDET) form an SM 1 region. Residues 268-333 (ADTGRGSHKR…SRKKKRKPKV (66 aa)) form a disordered region. Phosphoserine is present on Ser-280. Over residues 299 to 322 (GRTTRTDGSSVGGTFSRATTLSRG) the composition is skewed to polar residues. The SM 2 stretch occupies residues 343 to 356 (INQIFIRGENVLLV).

It belongs to the snRNP Sm proteins family. As to quaternary structure, component of the heptameric ring U7 snRNP complex, or U7 Sm protein core complex, at least composed of LSM10, LSM11, SNRPB, SNRPD3, SNRPE, SNRPF, SNRPG and U7 snRNA. Formation of the U7 snRNP is an ATP-dependent process mediated by a specialized SMN complex containing at least the Sm protein core complex and additionally, the U7-specific LSM10 and LSM11 proteins. Identified in a histone pre-mRNA complex, at least composed of ERI1, LSM11, SLBP, SNRPB, SYNCRIP and YBX1. Interacts (via the Sm domains) with CLNS1A. Interacts with SMN and ZNF473. Interacts with PRMT5 and WDR77.

The protein resides in the nucleus. Functionally, component of the U7 snRNP complex that is involved in the histone 3'-end pre-mRNA processing. Increases U7 snRNA levels but not histone 3'-end pre-mRNA processing activity, when overexpressed. Required for cell cycle progression from G1 to S phases. Binds specifically to the Sm-binding site of U7 snRNA. The polypeptide is U7 snRNA-associated Sm-like protein LSm11 (Homo sapiens (Human)).